A 570-amino-acid polypeptide reads, in one-letter code: Protein NRT1/ PTR FAMILY 8.1 (570 aa).

Position 98 is a phosphothreonine (threonine 98). Transmembrane regions (helical) follow at residues 99-119 (IATF…SASV), 140-160 (AVFF…KPCV), 182-202 (FFNW…TVLV), 210-230 (WGWG…FFFF), 329-349 (IITL…YSQM), 377-397 (LFDT…IIPL), 414-434 (MGIG…LEVV), 454-474 (IFWQ…TFIG), 494-514 (LSLT…TVVM), and 537-557 (YFFY…LWIS).

This sequence belongs to the major facilitator superfamily. Proton-dependent oligopeptide transporter (POT/PTR) (TC 2.A.17) family. In terms of tissue distribution, expressed in cotyledons, hypocotyls, leaves, roots, flowers, pistils and vascular tissue of sepals, anthers, carpels and funiculi. Not detected in seeds.

The protein localises to the cell membrane. Its function is as follows. Peptide transporter. Mediates the transport of di- and tripeptides. High affinity transporter with low selectivity. No transport of amino acids. In Arabidopsis thaliana (Mouse-ear cress), this protein is Protein NRT1/ PTR FAMILY 8.1 (NPF8.1).